The primary structure comprises 55 residues: Large ribosomal subunit protein bL33 (55 aa).

The protein belongs to the bacterial ribosomal protein bL33 family.

The chain is Large ribosomal subunit protein bL33 from Roseobacter denitrificans (strain ATCC 33942 / OCh 114) (Erythrobacter sp. (strain OCh 114)).